A 96-amino-acid chain; its full sequence is Large ribosomal subunit protein uL23 (96 aa).

It belongs to the universal ribosomal protein uL23 family. Part of the 50S ribosomal subunit. Contacts protein L29, and trigger factor when it is bound to the ribosome.

One of the early assembly proteins it binds 23S rRNA. One of the proteins that surrounds the polypeptide exit tunnel on the outside of the ribosome. Forms the main docking site for trigger factor binding to the ribosome. The chain is Large ribosomal subunit protein uL23 from Clostridium novyi (strain NT).